The following is a 206-amino-acid chain: Small ribosomal subunit protein uS4 (206 aa).

Positions 96 to 158 constitute an S4 RNA-binding domain; sequence SRLDNVVYRM…AKKQLRIQNA (63 aa).

Belongs to the universal ribosomal protein uS4 family. As to quaternary structure, part of the 30S ribosomal subunit. Contacts protein S5. The interaction surface between S4 and S5 is involved in control of translational fidelity.

Functionally, one of the primary rRNA binding proteins, it binds directly to 16S rRNA where it nucleates assembly of the body of the 30S subunit. In terms of biological role, with S5 and S12 plays an important role in translational accuracy. This chain is Small ribosomal subunit protein uS4, found in Francisella tularensis subsp. mediasiatica (strain FSC147).